Consider the following 358-residue polypeptide: MPRLLIAASGTGGHLFPALSVADALPAGWSAHWLGVPDRLETTLVPERYPLTTVNAGGLQGRGLKKVVQLLRLLAASRDVRRLIRRNGIDVVFTTGGYIAAPAILGARWSGVPVVLHESNAIPGRVTRLLGRACTQVAIGLPAAARRIPGCKAIVTGTPVRNSFLQTQTLPDWVPQGPGPLLVVMGGSQGALGLNRMVRPLLPMLLSEGCRVVHLTGSNDPDVNSIKHPGFAERPFSDAIPALLQHADLAISRAGAGSLSELAVSGTPTVLVPFPQAADRHQDANAACAAALGAAVIVHQHGPSEPTLRQTLWRLLGPRLRSCDSAADPLVSMAQAMGTLAEADADQQLAALLQGLVR.

UDP-N-acetyl-alpha-D-glucosamine is bound by residues 11 to 13, Asn120, Arg161, Ser188, and Gln282; that span reads TGG.

Belongs to the glycosyltransferase 28 family. MurG subfamily.

Its subcellular location is the cell inner membrane. It carries out the reaction di-trans,octa-cis-undecaprenyl diphospho-N-acetyl-alpha-D-muramoyl-L-alanyl-D-glutamyl-meso-2,6-diaminopimeloyl-D-alanyl-D-alanine + UDP-N-acetyl-alpha-D-glucosamine = di-trans,octa-cis-undecaprenyl diphospho-[N-acetyl-alpha-D-glucosaminyl-(1-&gt;4)]-N-acetyl-alpha-D-muramoyl-L-alanyl-D-glutamyl-meso-2,6-diaminopimeloyl-D-alanyl-D-alanine + UDP + H(+). The protein operates within cell wall biogenesis; peptidoglycan biosynthesis. Functionally, cell wall formation. Catalyzes the transfer of a GlcNAc subunit on undecaprenyl-pyrophosphoryl-MurNAc-pentapeptide (lipid intermediate I) to form undecaprenyl-pyrophosphoryl-MurNAc-(pentapeptide)GlcNAc (lipid intermediate II). The polypeptide is UDP-N-acetylglucosamine--N-acetylmuramyl-(pentapeptide) pyrophosphoryl-undecaprenol N-acetylglucosamine transferase (Synechococcus sp. (strain WH7803)).